A 373-amino-acid polypeptide reads, in one-letter code: Protein SENSITIVE TO PROTON RHIZOTOXICITY 2 (373 aa).

C2H2-type zinc fingers lie at residues 217–239 (HYCQICGKGFKRDANLRMHMRAH) and 327–362 (KHCGDIKWVCSCGTKFSRKDKLMSHVSLFLGHVPAH).

As to expression, expressed at low levels in roots (e.g. root tips and lateral roots), leaves (e.g. at the edge of mature leaves, possibly in hydathodes, and in vascular bundles), flowers (e.g. floral filaments), stems, siliques and cotyledons.

It localises to the nucleus. In terms of biological role, probable transcription factor. Together with STOP1, plays a critical role in tolerance to major stress factors in acid soils such as proton H(+) and aluminum ion Al(3+). Required for the expression of genes in response to acidic stress (e.g. ALMT1 and MATE), and Al-activated citrate exudation. The chain is Protein SENSITIVE TO PROTON RHIZOTOXICITY 2 from Arabidopsis thaliana (Mouse-ear cress).